The sequence spans 60 residues: Small ribosomal subunit protein bS21 (60 aa).

The segment at 38 to 60 (KGVKRREKEKAARKRLQKKHRMY) is disordered.

It belongs to the bacterial ribosomal protein bS21 family.

The polypeptide is Small ribosomal subunit protein bS21 (Mycoplasmoides gallisepticum (strain R(low / passage 15 / clone 2)) (Mycoplasma gallisepticum)).